A 34-amino-acid chain; its full sequence is Photosystem II reaction center protein T (34 aa).

Residues 3–23 traverse the membrane as a helical segment; sequence ALVYTFLLVGTLGIIFFAIFF.

Belongs to the PsbT family. PSII is composed of 1 copy each of membrane proteins PsbA, PsbB, PsbC, PsbD, PsbE, PsbF, PsbH, PsbI, PsbJ, PsbK, PsbL, PsbM, PsbT, PsbY, PsbZ, Psb30/Ycf12, at least 3 peripheral proteins of the oxygen-evolving complex and a large number of cofactors. It forms dimeric complexes.

The protein resides in the plastid. It is found in the chloroplast thylakoid membrane. Its function is as follows. Found at the monomer-monomer interface of the photosystem II (PS II) dimer, plays a role in assembly and dimerization of PSII. PSII is a light-driven water plastoquinone oxidoreductase, using light energy to abstract electrons from H(2)O, generating a proton gradient subsequently used for ATP formation. The chain is Photosystem II reaction center protein T from Klebsormidium bilatum (Filamentous green alga).